Here is a 652-residue protein sequence, read N- to C-terminus: Zinc finger protein 503 (652 aa).

Residues 1–11 (MSTAPSLSALR) show a composition bias toward polar residues. Positions 1-72 (MSTAPSLSAL…HAVPPSDPLR (72 aa)) are disordered. The segment covering 16–32 (SGGGGGGGGGGGSGGGS) has biased composition (gly residues). Position 107 is a phosphoserine (S107). Disordered stretches follow at residues 126-283 (SQIG…GVPA) and 296-338 (INVD…SSVL). Residues 135–144 (PSSKLSSVAS) are compositionally biased toward low complexity. 2 stretches are compositionally biased toward gly residues: residues 145-157 (NGGG…NGAG) and 194-209 (GGGG…GGGV). K213 is subject to N6-acetyllysine. Polar residues predominate over residues 221-230 (ATCQPFTPRT). Low complexity predominate over residues 231–244 (GSPSSSASACSPGG). S235 and S241 each carry phosphoserine. The segment covering 254 to 263 (EGKDDKKDPE) has biased composition (basic and acidic residues). Positions 264–283 (AGGGGSSKGSGGASADGVPA) are enriched in gly residues. Low complexity predominate over residues 314–336 (GSDCGGSSSSSSGSGPSAPTSSS). The segment at 520–548 (HICNWVSANGPCDKRFATSEELLSHLRTH) adopts a C2H2-type zinc-finger fold. Omega-N-methylarginine is present on R642.

It belongs to the Elbow/Noc family.

Its subcellular location is the nucleus. Its function is as follows. May function as a transcriptional repressor. The sequence is that of Zinc finger protein 503 (Znf503) from Mus musculus (Mouse).